The following is a 23-amino-acid chain: Acidic phospholipase A2 CTs-A1 (23 aa).

It depends on Ca(2+) as a cofactor. Post-translationally, contains 7 disulfide bonds. As to expression, expressed by the venom gland.

It is found in the secreted. It carries out the reaction a 1,2-diacyl-sn-glycero-3-phosphocholine + H2O = a 1-acyl-sn-glycero-3-phosphocholine + a fatty acid + H(+). Snake venom phospholipase A2 (PLA2) that shows a moderate inhibition of ADP-induced human platelet aggregation when tested on platelet rich plasma. Exhibits moderate hydrolytic activities and prefers the anionic micelles (dPPC with deoxycholate) to the zwitterionic micelles (dPPC with Triton X-100). PLA2 catalyzes the calcium-dependent hydrolysis of the 2-acyl groups in 3-sn-phosphoglycerides. This chain is Acidic phospholipase A2 CTs-A1, found in Trimeresurus stejnegeri (Chinese green tree viper).